The chain runs to 182 residues: UPF0397 protein BCAH187_A2708 (182 aa).

5 helical membrane-spanning segments follow: residues 9-29 (VVAIGIGAALYGILGLWGFSI), 40-60 (AILTVFGALFGPVAGLLIGLI), 71-91 (WGIWWGWVISSGIIGFAMGFI), 114-134 (ITGLIGIVIAIIFAGAFDIIV), and 142-162 (IVIQVLGATIADVIVFLVLGL).

It belongs to the UPF0397 family.

The protein resides in the cell membrane. The polypeptide is UPF0397 protein BCAH187_A2708 (Bacillus cereus (strain AH187)).